The primary structure comprises 337 residues: WRKY transcription factor 23 (337 aa).

A disordered region spans residues 100–160 (INPPATPNSS…KNNQKRQREA (61 aa)). The span at 106-118 (PNSSSISSASSEA) shows a compositional bias: low complexity. Residues 142-155 (HTKKQLKAKKNNQK) show a composition bias toward basic residues. Positions 168–233 (SEVDHLEDGY…YEGQHTHISP (66 aa)) form a DNA-binding region, WRKY.

This sequence belongs to the WRKY group II-c family.

It localises to the nucleus. Transcription factor. Interacts specifically with the W box (5'-(T)TGAC[CT]-3'), a frequently occurring elicitor-responsive cis-acting element. The chain is WRKY transcription factor 23 (WRKY23) from Arabidopsis thaliana (Mouse-ear cress).